Consider the following 121-residue polypeptide: Protein yippee-like 5 (121 aa).

A Yippee domain is found at 13–110 (RLFSCANCDA…LERALVRESE (98 aa)). Zn(2+)-binding residues include Cys-17, Cys-20, Cys-73, and Cys-76. Ser-118 carries the post-translational modification Phosphoserine.

Belongs to the yippee family. As to quaternary structure, identified in the CTLH complex that contains GID4, RANBP9 and/or RANBP10, MKLN1, MAEA, RMND5A (or alternatively its paralog RMND5B), GID8, ARMC8, WDR26 and YPEL5. Within this complex, MAEA, RMND5A (or alternatively its paralog RMND5B), GID8, WDR26, and RANBP9 and/or RANBP10 form the catalytic core, while GID4, MKLN1, ARMC8 and YPEL5 have ancillary roles. Interacts with RANBP9 and RANBP10.

The protein localises to the nucleus. It localises to the cytoplasm. Its subcellular location is the cytoskeleton. The protein resides in the microtubule organizing center. It is found in the centrosome. The protein localises to the spindle pole. It localises to the midbody. Functionally, component of the CTLH E3 ubiquitin-protein ligase complex that selectively accepts ubiquitin from UBE2H and mediates ubiquitination and subsequent proteasomal degradation of the transcription factor HBP1. Required for normal cell proliferation. The sequence is that of Protein yippee-like 5 (YPEL5) from Macaca fascicularis (Crab-eating macaque).